We begin with the raw amino-acid sequence, 184 residues long: Leucine-rich repeat-containing protein 20 (184 aa).

6 LRR repeats span residues 23–44, 51–72, 75–96, 98–120, 121–141, and 145–167; these read GSDT…IYKV, QIHL…FMTT, QLRE…VSSL, HLRA…TTLP, ALET…EKLA, and ALRV…APPL. S175 bears the Phosphoserine mark.

The sequence is that of Leucine-rich repeat-containing protein 20 (Lrrc20) from Mus musculus (Mouse).